A 337-amino-acid chain; its full sequence is Biotin synthase (337 aa).

The Radical SAM core domain maps to 62 to 289 (NAVQLSTLIS…KAMVRLSAGR (228 aa)). [4Fe-4S] cluster contacts are provided by Cys77, Cys81, and Cys84. [2Fe-2S] cluster-binding residues include Cys121, Cys152, Cys212, and Arg284.

Belongs to the radical SAM superfamily. Biotin synthase family. Homodimer. [4Fe-4S] cluster serves as cofactor. [2Fe-2S] cluster is required as a cofactor.

It catalyses the reaction (4R,5S)-dethiobiotin + (sulfur carrier)-SH + 2 reduced [2Fe-2S]-[ferredoxin] + 2 S-adenosyl-L-methionine = (sulfur carrier)-H + biotin + 2 5'-deoxyadenosine + 2 L-methionine + 2 oxidized [2Fe-2S]-[ferredoxin]. It functions in the pathway cofactor biosynthesis; biotin biosynthesis; biotin from 7,8-diaminononanoate: step 2/2. Catalyzes the conversion of dethiobiotin (DTB) to biotin by the insertion of a sulfur atom into dethiobiotin via a radical-based mechanism. The polypeptide is Biotin synthase (Nitrosomonas europaea (strain ATCC 19718 / CIP 103999 / KCTC 2705 / NBRC 14298)).